Reading from the N-terminus, the 87-residue chain is Pyocin-S2 immunity protein (87 aa).

It belongs to the colicins ColE2/ColE8/ColE9 and pyocins S1/S2 family.

This is Pyocin-S2 immunity protein (imm2) from Pseudomonas aeruginosa (strain ATCC 15692 / DSM 22644 / CIP 104116 / JCM 14847 / LMG 12228 / 1C / PRS 101 / PAO1).